A 1591-amino-acid polypeptide reads, in one-letter code: Rho guanine nucleotide exchange factor TIAM1 (1591 aa).

Residues 1 to 78 (MGNAESQHVE…AENGLEPFSQ (78 aa)) form a disordered region. Gly-2 carries N-myristoyl glycine lipidation. Positions 7 to 19 (QHVEHEFYGEKHA) are enriched in basic and acidic residues. Residues 20-49 (SLGRKHTSRSLRLSHKTRRTRHASSGKVIH) show a composition bias toward basic residues. Residues 53–67 (EVSTRSSSTPSIPQS) show a composition bias toward low complexity. Ser-231 bears the Phosphoserine mark. Disordered stretches follow at residues 298-379 (SEGA…GDAA) and 393-422 (MSTT…SPGQ). Composition is skewed to polar residues over residues 300-313 (GATN…NSMQ) and 340-361 (TTDT…SPTT). 2 positions are modified to phosphoserine: Ser-356 and Ser-358. Over residues 367–377 (GSDSGSSSTGD) the composition is skewed to low complexity. The span at 412-422 (QSSGTLSSPGQ) shows a compositional bias: polar residues. The PH 1 domain maps to 434 to 549 (VRKAGALAVK…TAIHSACATA (116 aa)). Ser-695 carries the post-translational modification Phosphoserine. One can recognise an RBD domain in the interval 765–832 (TPSWFCLPNN…QPEEDIYELL (68 aa)). The residue at position 829 (Tyr-829) is a Phosphotyrosine; by NTRK2. The PDZ domain maps to 845–908 (SIHIEKSDTA…NNRAADALNS (64 aa)). The segment at 939 to 1034 (SPPHRVDGPA…TGPQLATMRQ (96 aa)) is disordered. Positions 958–975 (LTSNPGHSLCSEQGSSAE) are enriched in polar residues. The segment covering 977–990 (APEETEGPDLESSD) has biased composition (acidic residues). Residues 1014–1024 (PSDQSPSPQDS) show a composition bias toward low complexity. The span at 1025-1034 (TGPQLATMRQ) shows a compositional bias: polar residues. The DH domain occupies 1040–1234 (KLRKVICELL…NKVASHINEM (195 aa)). The PH 2 domain occupies 1261–1397 (DLSMGDLLLH…KAVHSILRDK (137 aa)). A Phosphotyrosine modification is found at Tyr-1323. Residues Lys-1404 and Lys-1420 each participate in a glycyl lysine isopeptide (Lys-Gly) (interchain with G-Cter in ubiquitin) cross-link. A disordered region spans residues 1456–1482 (TIDSDAVSASSPEKESQQPPGGGDTDR). A Phosphoserine modification is found at Ser-1519.

This sequence belongs to the TIAM family. As to quaternary structure, component of the Par polarity complex, composed of at least phosphorylated PRKCZ, PARD3 and TIAM1. Interacts with NTRK2; mediates the activation of RAC1 by BDNF. Interacts with MAPK8IP2 and CD44. Interacts with BAIAP2. Interacts with EPHA8; regulates clathrin-mediated endocytosis of EPHA8. Interacts with PARD3. Interacts (via PDZ domain) with CNTNAP4, SDC1 and SDC3 (via C-terminus). Post-translationally, ubiquitinated. Undergoes 'Lys-48' ubiquitination at Lys-1404 and Lys-1420 by a CUL3(KBTBD6/7) E3 ubiquitin ligase complex composed of CUL3, RBX1, KBTBD6 and KBTBD7. 'Lys-48' ubiquitination at Lys-1404 and Lys-1420 triggers proteasomal degradation. Ubiquitination at Lys-1404 and Lys-1420 by CUL3(KBTBD6/7) also requires the membrane-associated protein GABARAP and may therefore be spatially restricted within the cell. In terms of tissue distribution, found in virtually all analyzed tumor cell lines including B- and T-lymphomas, neuroblastomas, melanomas and carcinomas.

The protein localises to the cell junction. It is found in the cell membrane. Functionally, guanyl-nucleotide exchange factor that activates RHO-like proteins and connects extracellular signals to cytoskeletal activities. Activates RAC1, CDC42, and to a lesser extent RHOA and their downstream signaling to regulate processes like cell adhesion and cell migration. The chain is Rho guanine nucleotide exchange factor TIAM1 from Homo sapiens (Human).